Consider the following 602-residue polypeptide: MKRGKCKEKDNGLKRISSESEVWNFLDVTVSELNKQKRSPGQTVSKRLHKKQRVVSNPDLSLPSSPVKQILRNGLQNSKYGSHKTGLERSASCSSIDASANHSSTTYREQRSYLMEEGLDTQPIVPREVSSGRELDSTNHTIGTERAFLIEEDVSEDDEIQMKSIHELRFAGEQQRIVDEIEYLVDGVTFSGNSSASRYLSLIGIAEKMFDNSFRLCLKSIRDVFLRIFEEIDPKDTLHTFLQIYIFATMANEMDCMSSLLDAYSNNVKLLLQTAITLEPQVPVSILAKSLPKSVKGAVQEFVIKAELTFSFSNESLASSDSISLAAIALMKTSSGVFAESELFTELINLLIEKSYPILKENDGSNNFLLHALCSSLEKFTDFQGSEKIQKVSQILSSKLQILIDEHNETNSPKIDDTVVHACSEKLLRTLIQTVNSNSDHALAVSKSEVPLFAYKILQKFSNFSSDDETTRELIILILGLLLGLVEESHEFIQTITHVEVSFGASALDVLISFYQKNESIVEISGYVVMILSHCFLNDPKAFAQLKPLISQFYESLHKFKNFHLKLKEELMMMGSNGLAIVSIIDELHKSLQDYLRSDLVK.

The tract at residues 34-66 (NKQKRSPGQTVSKRLHKKQRVVSNPDLSLPSSP) is disordered. Residues 54-66 (VVSNPDLSLPSSP) are compositionally biased toward polar residues. One can recognise a WAPL domain in the interval 160-492 (IQMKSIHELR…LGLVEESHEF (333 aa)).

This sequence belongs to the WAPL family.

The protein resides in the nucleus. Its subcellular location is the chromosome. Its function is as follows. Regulator of sister chromatid cohesion in mitosis which negatively regulates cohesin association with chromatin. The chain is Wings apart-like protein homolog 1 (wpl1) from Schizosaccharomyces pombe (strain 972 / ATCC 24843) (Fission yeast).